A 539-amino-acid chain; its full sequence is Nucleobase-ascorbate transporter 8 (539 aa).

The segment at 1-20 is disordered; the sequence is MAGDGVENAKPPQKQEDLQP. 12 helical membrane passes run 44–64, 79–99, 101–121, 141–161, 167–187, 189–209, 229–249, 295–315, 368–388, 399–421, 433–453, and 470–490; these read ILLG…IPTM, LIQT…FFGT, LPAV…IVLA, IQGA…SGLW, FLSP…LYEQ, FPML…LVIF, FAVI…TIGG, IFAM…TYIA, VGSR…SILG, APIV…LSLI, FILG…YQYT, and NIIN…AFFL.

Belongs to the nucleobase:cation symporter-2 (NCS2) (TC 2.A.40) family. In terms of tissue distribution, highly expressed in ovules, endosperm and embryo.

The protein resides in the cell membrane. The protein is Nucleobase-ascorbate transporter 8 (NAT8) of Arabidopsis thaliana (Mouse-ear cress).